Here is a 380-residue protein sequence, read N- to C-terminus: Probable acyl-CoA dehydrogenase YngJ (380 aa).

FAD contacts are provided by residues 123-132, 156-158, Arg-269, and 337-341; these read FGLTEPNAGS, WIT, and QIHGG. Glu-364 functions as the Proton acceptor in the catalytic mechanism. 366-368 is an FAD binding site; sequence TSE.

It belongs to the acyl-CoA dehydrogenase family. FAD serves as cofactor.

The enzyme catalyses a 2,3-saturated acyl-CoA + A = a 2,3-dehydroacyl-CoA + AH2. The sequence is that of Probable acyl-CoA dehydrogenase YngJ (yngJ) from Bacillus subtilis (strain 168).